The following is a 61-amino-acid chain: Small ribosomal subunit protein uS14 (61 aa).

Zn(2+)-binding residues include Cys24, Cys27, Cys40, and Cys43.

It belongs to the universal ribosomal protein uS14 family. Zinc-binding uS14 subfamily. As to quaternary structure, part of the 30S ribosomal subunit. Contacts proteins S3 and S10. Zn(2+) is required as a cofactor.

Binds 16S rRNA, required for the assembly of 30S particles and may also be responsible for determining the conformation of the 16S rRNA at the A site. The protein is Small ribosomal subunit protein uS14 of Treponema pallidum (strain Nichols).